The chain runs to 357 residues: Spermatogenesis- and oogenesis-specific basic helix-loop-helix-containing protein 1 (357 aa).

Residues 1–14 (MASGGHERANEDYR) show a composition bias toward basic and acidic residues. Residues 1 to 40 (MASGGHERANEDYRVSGITGCSKTPQPETQDSLQTSSQSS) are disordered. Residues 19 to 31 (TGCSKTPQPETQD) show a composition bias toward polar residues. A bHLH domain is found at 54-105 (PSLRRNVVSERERRRRISLSCEHLRALLPQFDGRREDMASVLEMSVYFLQLA). Residues 145–210 (KPDSGIAKPS…EPESSSLGPG (66 aa)) are disordered. Positions 200–209 (SEPESSSLGP) are enriched in low complexity.

As to quaternary structure, forms both hetero- and homodimers with SOHLH2. In males, it is mainly expressed in testis, while in females it is mainly expressed in ovary. In testis, it is exclusively expressed in spermatogonia, with a preference for prespermatogonia and type A spermatogonia. In ovary, it is detected in germ cell cysts, primordial follicles, and primary follicles but is undetectable by the secondary follicle stage (at protein level). Expressed in the majority of spermatogonia in adult animals, but not in the most undifferentiated spermatogonial population.

It localises to the cytoplasm. It is found in the nucleus. In terms of biological role, transcription regulator of both male and female germline differentiation. Suppresses genes involved in spermatogonial stem cells maintenance, and induces genes important for spermatogonial differentiation. Coordinates oocyte differentiation without affecting meiosis I. The protein is Spermatogenesis- and oogenesis-specific basic helix-loop-helix-containing protein 1 (Sohlh1) of Mus musculus (Mouse).